Consider the following 93-residue polypeptide: Acylphosphatase (93 aa).

A disulfide bridge connects residues Cys5 and Cys49. Residues 5 to 93 (CTIAWIYGRV…ETLTDFSIRY (89 aa)) enclose the Acylphosphatase-like domain. Catalysis depends on residues Arg20 and Asn38.

Belongs to the acylphosphatase family.

The catalysed reaction is an acyl phosphate + H2O = a carboxylate + phosphate + H(+). The sequence is that of Acylphosphatase from Salmonella arizonae (strain ATCC BAA-731 / CDC346-86 / RSK2980).